We begin with the raw amino-acid sequence, 331 residues long: MLVLGIESTAHTFGVGIAKDQPPYILANERDTFVPKEGGMKPGDLLKHHAEVSGTILRRALEKANISINDINYIAVALGPGIGPALRVGATLARALSLKYNKKLVPVNHGIGHIEIGYLTTEAKDPLILYLSGGNTIITTFYKGRFRIFGETLDIALGNMMDVFVREVNLAPPYIINGKHAIDICSEKGSKLLKLPYVVKGQDMSFSGLLTAALRLVGKEKLEDICYSIREIAFDMLLEATERALALTSKKELMIVGGVAASVSLRKKLEELGKEWDVQIKIVPPEFAGDNGAMIAYAGMLAASKGVFIDVDKSYIRPRWRVDEVDIPWRN.

Fe cation contacts are provided by histidine 109, histidine 113, and tyrosine 130. Substrate contacts are provided by residues tyrosine 130–glycine 134, aspartate 162, aspartate 183, and serine 262. A Fe cation-binding site is contributed by aspartate 290.

Belongs to the KAE1 / TsaD family. Requires Fe(2+) as cofactor.

Its subcellular location is the cytoplasm. It catalyses the reaction L-threonylcarbamoyladenylate + adenosine(37) in tRNA = N(6)-L-threonylcarbamoyladenosine(37) in tRNA + AMP + H(+). Functionally, required for the formation of a threonylcarbamoyl group on adenosine at position 37 (t(6)A37) in tRNAs that read codons beginning with adenine. Is probably involved in the transfer of the threonylcarbamoyl moiety of threonylcarbamoyl-AMP (TC-AMP) to the N6 group of A37. The sequence is that of tRNA N6-adenosine threonylcarbamoyltransferase from Saccharolobus islandicus (strain Y.G.57.14 / Yellowstone #1) (Sulfolobus islandicus).